A 577-amino-acid chain; its full sequence is Gamma-tubulin complex component gfh1 (577 aa).

The protein belongs to the TUBGCP family.

Its subcellular location is the cytoplasm. The protein resides in the cytoskeleton. It localises to the microtubule organizing center. The protein localises to the spindle pole body. Functionally, required for proper anchoring of astral microtubules at the spindle pole bodies (SPBs), during anaphase, ensuring correct cell polarity. This is Gamma-tubulin complex component gfh1 (gfh1) from Schizosaccharomyces pombe (strain 972 / ATCC 24843) (Fission yeast).